Reading from the N-terminus, the 310-residue chain is Pantothenate kinase (310 aa).

95 to 102 is an ATP binding site; the sequence is GSVAVGKS.

It belongs to the prokaryotic pantothenate kinase family.

It localises to the cytoplasm. It catalyses the reaction (R)-pantothenate + ATP = (R)-4'-phosphopantothenate + ADP + H(+). It functions in the pathway cofactor biosynthesis; coenzyme A biosynthesis; CoA from (R)-pantothenate: step 1/5. The sequence is that of Pantothenate kinase from Rhodococcus opacus (strain B4).